The sequence spans 31 residues: Potassium channel toxin alpha-KTx 5.1 (31 aa).

Intrachain disulfides connect Cys-3-Cys-21, Cys-8-Cys-26, and Cys-12-Cys-28. A [R/K]XCQ motif region spans residues 6–9 (RMCQ). The residue at position 31 (His-31) is a Histidine amide.

The protein belongs to the short scorpion toxin superfamily. Potassium channel inhibitor family. Alpha-KTx 05 subfamily. Two disulfide bonds are the minimal requirement needed to produce a nativelike and bio-active conformation in this toxin. The third disulfide provides an additional contribution to structure stabilization and can modulate biological potency depending on its position and the structural regions involved in biological activity. In terms of tissue distribution, expressed by the venom gland.

The protein resides in the secreted. Functionally, blocker for the small conductance calcium-activated potassium channels. Shows the best affinity for KCa2.2/KCNN2 (Kd=0.2 nM), followed by KCa2.3/KCNN3 (Kd=1.1 nM) and KCa2.1/KCNN1 (Kd=325 nM). The protein is Potassium channel toxin alpha-KTx 5.1 of Leiurus hebraeus (Hebrew deathstalker scorpion).